Here is a 397-residue protein sequence, read N- to C-terminus: Ribosomal RNA large subunit methyltransferase I (397 aa).

A PUA domain is found at 2 to 80; it reads SAAIYLVKGR…QDVNRAFFVK (79 aa).

Belongs to the methyltransferase superfamily. RlmI family.

It is found in the cytoplasm. It carries out the reaction cytidine(1962) in 23S rRNA + S-adenosyl-L-methionine = 5-methylcytidine(1962) in 23S rRNA + S-adenosyl-L-homocysteine + H(+). In terms of biological role, specifically methylates the cytosine at position 1962 (m5C1962) of 23S rRNA. In Vibrio vulnificus (strain YJ016), this protein is Ribosomal RNA large subunit methyltransferase I.